The following is a 418-amino-acid chain: Dihydrolipoyllysine-residue acetyltransferase component of pyruvate dehydrogenase complex (418 aa).

A Lipoyl-binding domain is found at 2–78; it reads PIKLLMPALS…PVNSLIAVLI (77 aa). Position 43 is an N6-lipoyllysine (lysine 43). The region spanning 133-170 is the Peripheral subunit-binding (PSBD) domain; sequence FASPLAKRLAKIQNVRIEEIKGSGPHGRIIKQDVLSHK. Histidine 388 is a catalytic residue.

It belongs to the 2-oxoacid dehydrogenase family. As to quaternary structure, forms a 24-polypeptide structural core with octahedral symmetry. The cofactor is (R)-lipoate.

The catalysed reaction is N(6)-[(R)-dihydrolipoyl]-L-lysyl-[protein] + acetyl-CoA = N(6)-[(R)-S(8)-acetyldihydrolipoyl]-L-lysyl-[protein] + CoA. Functionally, the pyruvate dehydrogenase complex catalyzes the overall conversion of pyruvate to acetyl-CoA and CO(2). It contains multiple copies of three enzymatic components: pyruvate dehydrogenase (E1), dihydrolipoamide acetyltransferase (E2) and lipoamide dehydrogenase (E3). This is Dihydrolipoyllysine-residue acetyltransferase component of pyruvate dehydrogenase complex (pdhC) from Rickettsia bellii (strain RML369-C).